Consider the following 335-residue polypeptide: Transcriptional activator NphR (335 aa).

In terms of domain architecture, HTH araC/xylS-type spans 231–329; that stretch reads TRVQRVIEQN…GSSPGLYRKE (99 aa). 2 DNA-binding regions (H-T-H motif) span residues 249 to 270 and 296 to 319; these read SDIA…NAEG and VADV…RSTF.

In terms of biological role, transcriptional activator of nphA1 and nphA2 involved in the degradation of 4-nitrophenol (4-NP). This is Transcriptional activator NphR (nphR) from Rhodococcus sp.